A 143-amino-acid polypeptide reads, in one-letter code: Large ribosomal subunit protein uL15 (143 aa).

The disordered stretch occupies residues 1 to 52; sequence MKLNTLAPAAGSKSAPKRLGRGIGSGLGKTSGKGHKGQKARSGGYHKVGFEG. A compositionally biased stretch (gly residues) spans 21-31; it reads RGIGSGLGKTS.

It belongs to the universal ribosomal protein uL15 family. As to quaternary structure, part of the 50S ribosomal subunit.

Its function is as follows. Binds to the 23S rRNA. This Francisella tularensis subsp. novicida (strain U112) protein is Large ribosomal subunit protein uL15.